The following is a 200-amino-acid chain: MQLNVNGAQAIEVSERTFGGEFNETLVHQAVVAYMAGGRQGSKAQKTRSEVSGGGKKPWRQKGTGRARAGTIRSPIWRGGGTTFAAKPRSHEQKLNKKMYRAALRSILAELVRLDRLVVVADFAVDAPKTKGLVAKLDTLGLKDVLIVTDGVDENLYLAARNLAHVDVRDVQGSDPVSLIAYDKVLVTVSAVKKFEELLG.

The tract at residues 38-67 (GRQGSKAQKTRSEVSGGGKKPWRQKGTGRA) is disordered.

Belongs to the universal ribosomal protein uL4 family. Part of the 50S ribosomal subunit.

Its function is as follows. One of the primary rRNA binding proteins, this protein initially binds near the 5'-end of the 23S rRNA. It is important during the early stages of 50S assembly. It makes multiple contacts with different domains of the 23S rRNA in the assembled 50S subunit and ribosome. Forms part of the polypeptide exit tunnel. The chain is Large ribosomal subunit protein uL4 from Pseudomonas paraeruginosa (strain DSM 24068 / PA7) (Pseudomonas aeruginosa (strain PA7)).